Consider the following 305-residue polypeptide: Putative HTH-type transcriptional regulatory protein Saci_1344 (305 aa).

In terms of domain architecture, HTH cro/C1-type spans 128 to 183 (LREKREEKNMSLGELSQRLGVSRISVYDYEKEDSYVSIEVAEKLIEIFGDEVIGDI). Positions 139–158 (LGELSQRLGVSRISVYDYEK) form a DNA-binding region, H-T-H motif.

In Sulfolobus acidocaldarius (strain ATCC 33909 / DSM 639 / JCM 8929 / NBRC 15157 / NCIMB 11770), this protein is Putative HTH-type transcriptional regulatory protein Saci_1344.